Here is a 326-residue protein sequence, read N- to C-terminus: Chain length determinant protein (326 aa).

The Cytoplasmic portion of the chain corresponds to 1 to 31 (MRVENNNVSGQNHDPEQIDLIDLLVQLWRGK). The chain crosses the membrane as a helical span at residues 32–52 (MTIIISVIVAIALAIGYLAVA). The Periplasmic segment spans residues 53–295 (KEKWTSTAII…LPIRRDSPKK (243 aa)). A helical membrane pass occupies residues 296 to 316 (AITLILAVLLGGMVGAGIVLG). Residues 317–326 (RNALRNYNAK) are Cytoplasmic-facing.

The protein belongs to the WzzB/Cld/Rol family. As to quaternary structure, homodimer.

Its subcellular location is the cell inner membrane. It functions in the pathway bacterial outer membrane biogenesis; lipopolysaccharide biosynthesis. In terms of biological role, confers a modal distribution of chain length on the O-antigen component of lipopolysaccharide (LPS). Gives rise to a reduced number of short chain molecules and increases in numbers of longer molecules. In Escherichia coli (strain K12), this protein is Chain length determinant protein (wzzB).